The chain runs to 317 residues: Prenyl transferase paxC (317 aa).

Positions 53 and 86 each coordinate substrate. The Mg(2+) site is built by Asp-93 and Asp-97. Substrate-binding residues include Arg-102, Lys-186, Thr-187, Gln-216, Asn-223, and Lys-233.

Belongs to the FPP/GGPP synthase family.

Its pathway is secondary metabolite biosynthesis. Functionally, prenyl transferase; part of the gene cluster that mediates the biosynthesis of paxalline, a mycotoxin that acts as an inhibitor of mammalian maxi-K channels. PaxG, the geranylgeranyl diphosphate (GGPP) synthase is proposed to catalyze the first step in paxilline biosynthesis. Condensation of indole-3-glycerol phosphate with GGPP by paxC then forms 3-geranylgeranylindole (3-GGI), followed by epoxidation and cyclization of this intermediate (by paxM and paxB) to form paspaline. Paspaline is subsequently converted to 13-desoxypaxilline by paxP, the latter being then converted to paxilline by paxQ. Finally paxilline can be mono- and di-prenylated by paxD. This is Prenyl transferase paxC from Penicillium paxilli.